The chain runs to 346 residues: SUMO-activating enzyme subunit 1 (346 aa).

Methionine 1 is modified (N-acetylmethionine). Valine 2 bears the N-acetylvaline; in SUMO-activating enzyme subunit 1, N-terminally processed mark. Serine 12 carries the post-translational modification Phosphoserine. Lysine 198 is modified (N6-acetyllysine).

Belongs to the ubiquitin-activating E1 family. Heterodimer of SAE1 and UBA2/SAE2. The heterodimer corresponds to the two domains that are encoded on a single polypeptide chain in ubiquitin-activating enzyme E1. Interacts with UBE2I. Expression level increases during S phase and drops in G2 phase (at protein level).

The protein resides in the nucleus. Its pathway is protein modification; protein sumoylation. The heterodimer acts as an E1 ligase for SUMO1, SUMO2, SUMO3, and probably SUMO4. It mediates ATP-dependent activation of SUMO proteins followed by formation of a thioester bond between a SUMO protein and a conserved active site cysteine residue on UBA2/SAE2. The protein is SUMO-activating enzyme subunit 1 (SAE1) of Homo sapiens (Human).